The following is a 296-amino-acid chain: MSSKTQLRQQFCELTGTSNTTATKYLESVRYDLARAIDNYYNKHPNKAQVTKKPVKVKIDDRLIQIFDKYKDSEDPNKIDIEGTLTYLGDLGISPDQIESLSLALLLKSPKTGVFTRENFLHIWQYYQCFDIGAMSEFITRFNKDLVNNIGGFKDISTVSDDENKSVPLKFQDLYNFTFKFSLETESQKFLDLDTAIEYWKLLLPIITETYSKDNKLDEEFKNHVNERVEQWFKFLTDTEYMTKKSISYDSWSMFYLFFKEIVLIDPIKFKDYDEMAAWPSVVDEFLEYLHDFELL.

One can recognise a UBA-like domain in the interval 4–41 (KTQLRQQFCELTGTSNTTATKYLESVRYDLARAIDNYY). The DCUN1 domain maps to 58 to 291 (KIDDRLIQIF…VVDEFLEYLH (234 aa)).

Functionally, may contribute to neddylation of cullin components of SCF-type E3 ubiquitin ligase complexes. Neddylation of cullins play an essential role in the regulation of SCF-type complexes activity. The chain is Defective in cullin neddylation protein 1 (DCN1) from Candida albicans (strain SC5314 / ATCC MYA-2876) (Yeast).